The primary structure comprises 554 residues: MAIQHPDIQPAVNHSVQVAIAGAGPVGLMMANYLGQMGIDVLVVEKLDKLIDYPRAIGIDDEALRTMQSVGLVDNVLPHTTPWHAMRFLTPKGRCFADIQPMTDEFGWPRRNAFIQPQVDAVMLEGVSRFPNVRCLFSRELEAFSQQDDEVTLHLKTAEGLREIVKAQWLVACDGGASFVRRTLNVPFEGKTAPNQWIVVDIANDPLSTPHIYLCCDPVRPYVSAALPHAVRRFEFMVMPGETEEQLREPQNMRKLLSKVLPNPDNVELIRQRVYTHNARLAQRFRIDRVLLAGDAAHIMPVWQGQGYNSGMRDAFNLAWKLALVIQGKARDALLDTYQQERRDHAKAMIDLSVTAGNVLAPPKRWQGTLRDGVSWLLNYLPPVKRYFLEMRFKPMPQYYGGALVREGEAKHSPVGKMFIQPKVTLENGDVTLLDNAIGANFAVIGWGCNPLWGMSDEQIQQWRALSTRFIQVVPEVQIHTAQDNHDGVLRVGDTQGRLRSWFAQHNASLVVMRPDRFVAATAIPQTLGKTLNKLASVMTLTRPDADVSVEKVA.

FAD contacts are provided by residues 17 to 46 (QVAI…VVEK) and 285 to 295 (FRIDRVLLAGD).

The protein belongs to the PheA/TfdB FAD monooxygenase family. Requires FAD as cofactor.

The catalysed reaction is 3-(3-hydroxyphenyl)propanoate + NADH + O2 + H(+) = 3-(2,3-dihydroxyphenyl)propanoate + NAD(+) + H2O. The enzyme catalyses (2E)-3-(3-hydroxyphenyl)prop-2-enoate + NADH + O2 + H(+) = (2E)-3-(2,3-dihydroxyphenyl)prop-2-enoate + NAD(+) + H2O. It functions in the pathway aromatic compound metabolism; 3-phenylpropanoate degradation. Catalyzes the insertion of one atom of molecular oxygen into position 2 of the phenyl ring of 3-(3-hydroxyphenyl)propionate (3-HPP) and hydroxycinnamic acid (3HCI). This Escherichia coli O157:H7 protein is 3-(3-hydroxy-phenyl)propionate/3-hydroxycinnamic acid hydroxylase.